The chain runs to 192 residues: Nucleoside triphosphate pyrophosphatase (192 aa).

Aspartate 73 serves as the catalytic Proton acceptor.

The protein belongs to the Maf family. The cofactor is a divalent metal cation.

Its subcellular location is the cytoplasm. The enzyme catalyses a ribonucleoside 5'-triphosphate + H2O = a ribonucleoside 5'-phosphate + diphosphate + H(+). It carries out the reaction a 2'-deoxyribonucleoside 5'-triphosphate + H2O = a 2'-deoxyribonucleoside 5'-phosphate + diphosphate + H(+). Functionally, nucleoside triphosphate pyrophosphatase. May have a dual role in cell division arrest and in preventing the incorporation of modified nucleotides into cellular nucleic acids. The polypeptide is Nucleoside triphosphate pyrophosphatase (Ehrlichia ruminantium (strain Gardel)).